The following is an 87-amino-acid chain: MANIKSAKKRAIQAEKARKHNASRRSMTRTFIKKVVAAIASGDKAVAQAAFAAAQPILDRMATKGLIHKNKAARHKSRLSAQIVAMQ.

Positions 1–26 (MANIKSAKKRAIQAEKARKHNASRRS) are disordered.

This sequence belongs to the bacterial ribosomal protein bS20 family.

Binds directly to 16S ribosomal RNA. The protein is Small ribosomal subunit protein bS20 of Tolumonas auensis (strain DSM 9187 / NBRC 110442 / TA 4).